A 480-amino-acid chain; its full sequence is MSKGTRDRKNIYVSPEEMARQQRFIDEIKELNYRKEVKTGKKKLYCLNTFGCQMNEHDSEKLAGMLAEMGYAETDNVNESDLVIYNTCCVRENAELKVYGHLGMLKPLKNQKPDLVIAVCGCMMQQPEVVEHIKKTYSHVDLIFGTHNLYKFPELLYSAMDSQTTVVDVWDCDGQIAENVAIERKDGVKAWVTVMYGCNNFCTYCIVPYVRGRERSRSMDDILEEVRMLGRQGFKEITLLGQNVNSYGKDIGDGTSFAELIREVNKIPGIERIRFTTSHPKDLSDDLIYAMRDCEKVCEHLHLPFQAGSTRILKLMNRKYTKEDYINLVAKIKENIPDIALTTDIIVGFPGETEEDFSDTLDILEKVRFDNAYTFLYSKRTGTPAAKMEDQVPEEVKKERFQRLLETQNRISKEINDTFLGKVVEVLVEGVSKTNDKIFTGRTRGNKVVNFEADASLIGKLVNVRINTVKTWSLEGSIVR.

Positions 43 to 161 constitute an MTTase N-terminal domain; sequence KLYCLNTFGC…FPELLYSAMD (119 aa). [4Fe-4S] cluster is bound by residues C52, C88, C122, C198, C202, and C205. In terms of domain architecture, Radical SAM core spans 184 to 414; sequence RKDGVKAWVT…LETQNRISKE (231 aa). One can recognise a TRAM domain in the interval 417-480; sequence DTFLGKVVEV…TWSLEGSIVR (64 aa).

Belongs to the methylthiotransferase family. MiaB subfamily. In terms of assembly, monomer. [4Fe-4S] cluster is required as a cofactor.

It localises to the cytoplasm. The catalysed reaction is N(6)-dimethylallyladenosine(37) in tRNA + (sulfur carrier)-SH + AH2 + 2 S-adenosyl-L-methionine = 2-methylsulfanyl-N(6)-dimethylallyladenosine(37) in tRNA + (sulfur carrier)-H + 5'-deoxyadenosine + L-methionine + A + S-adenosyl-L-homocysteine + 2 H(+). Its function is as follows. Catalyzes the methylthiolation of N6-(dimethylallyl)adenosine (i(6)A), leading to the formation of 2-methylthio-N6-(dimethylallyl)adenosine (ms(2)i(6)A) at position 37 in tRNAs that read codons beginning with uridine. This Acetivibrio thermocellus (strain ATCC 27405 / DSM 1237 / JCM 9322 / NBRC 103400 / NCIMB 10682 / NRRL B-4536 / VPI 7372) (Clostridium thermocellum) protein is tRNA-2-methylthio-N(6)-dimethylallyladenosine synthase.